The sequence spans 265 residues: U6 snRNA phosphodiesterase 1 (265 aa).

Residues Met1 to His67 form a disordered region. Basic and acidic residues predominate over residues Ala20–Ser32. His120 serves as the catalytic Proton acceptor. Position 120–122 (His120–Ser122) interacts with AMP. Residues Gln164, Tyr202, and Ser206–Ser210 each bind UMP. Residues Tyr202 and Asp204 to Ser210 contribute to the AMP site. His208 functions as the Proton donor in the catalytic mechanism.

Belongs to the 2H phosphoesterase superfamily. USB1 family. Interacts with PLRG1, CDC5L and PRPF19.

Its subcellular location is the nucleus. The catalysed reaction is a 3'-end uridylyl-uridine-RNA = a 3'-end 2',3'-cyclophospho-uridine-RNA + uridine. The enzyme catalyses a 3'-end uridylyl-adenosine-RNA = a 3'-end 2',3'-cyclophospho-uridine-RNA + adenosine. Functionally, 3'-5' RNA exonuclease that trims the 3' end of oligo(U) and oligo(A) tracts of the pre-U6 small nuclear RNA (snRNA) molecule, leading to the formation of a mature U6 snRNA 3' end-terminated with a 2',3'-cyclic phosphate. Participates in the U6 snRNA 3' end processing that prevents U6 snRNA degradation. In addition also removes uridines from the 3' end of U6atac snRNA and possibly the vault RNA VTRNA1-1. The chain is U6 snRNA phosphodiesterase 1 from Bos taurus (Bovine).